The primary structure comprises 130 residues: Albumin-1 D (130 aa).

Positions 1 to 26 are cleaved as a signal peptide; that stretch reads MASVKLASLIVLFATLGMFLTKNVGA. 3 cysteine pairs are disulfide-bonded: cysteine 29–cysteine 46, cysteine 33–cysteine 48, and cysteine 41–cysteine 58. Propeptides lie at residues 64 to 69 and 123 to 130; these read VFLKAN and LLKSVSTA.

The C-terminal glycine may be removed from PA1b. As to expression, major component of both the cotyledons and embryonic axes of mature seeds.

Its function is as follows. PA1b binds to basic 7S globulin (BG) and stimulates its phosphorylation activity. Involved in the signal transduction system to regulate the growth and differentiation as a hormone peptide. Toxic to various insects through binding to a high affinity binding site in the insect gut. This is Albumin-1 D from Pisum sativum (Garden pea).